Reading from the N-terminus, the 749-residue chain is Catalase-peroxidase 2 (749 aa).

Positions Met1 to Ala27 are cleaved as a signal peptide. Residues Trp107–Tyr229 constitute a cross-link (tryptophyl-tyrosyl-methioninium (Trp-Tyr) (with M-255)). His108 acts as the Proton acceptor in catalysis. The tryptophyl-tyrosyl-methioninium (Tyr-Met) (with W-107) cross-link spans Tyr229–Met255. His270 serves as a coordination point for heme b.

This sequence belongs to the peroxidase family. Peroxidase/catalase subfamily. As to quaternary structure, homodimer or homotetramer. Heme b is required as a cofactor. Post-translationally, formation of the three residue Trp-Tyr-Met cross-link is important for the catalase, but not the peroxidase activity of the enzyme.

It carries out the reaction H2O2 + AH2 = A + 2 H2O. The catalysed reaction is 2 H2O2 = O2 + 2 H2O. Its function is as follows. Bifunctional enzyme with both catalase and broad-spectrum peroxidase activity. In Legionella pneumophila (strain Lens), this protein is Catalase-peroxidase 2.